Here is a 291-residue protein sequence, read N- to C-terminus: Halorhodopsin (291 aa).

Topologically, residues 1 to 30 are extracellular; it reads MTETLPPVTESAVALQAEVTQRELFEFVLN. Residues 31–56 form a helical membrane-spanning segment; it reads DPLLASSLYINIALAGLSILLFVFMT. Topologically, residues 57–62 are cytoplasmic; that stretch reads RGLDDP. Residues 63-86 form a helical membrane-spanning segment; that stretch reads RAKLIAVSTILVPVVSIASYTGLA. Over 87-120 the chain is Extracellular; sequence SGLTISVLEMPAGHFAEGSSVMLGGEEVDGVVTM. Residues 121–142 traverse the membrane as a helical segment; it reads WGRYLTWALSTPMILLALGLLA. Topologically, residues 143–145 are cytoplasmic; it reads GSN. The helical transmembrane segment at 146–169 threads the bilayer; it reads ATKLFTAITFDIAMCVTGLAAALT. At 170 to 172 the chain is on the extracellular side; that stretch reads TSS. A helical transmembrane segment spans residues 173–195; sequence HLMRWFWYAISCACFLVVLYILL. Topologically, residues 196-207 are cytoplasmic; that stretch reads VEWAQDAKAAGT. Residues 208–231 traverse the membrane as a helical segment; that stretch reads ADMFNTLKLLTVVMWLGYPIVWAL. The Extracellular segment spans residues 232 to 240; it reads GVEGIAVLP. A helical membrane pass occupies residues 241-269; sequence VGVTSWGYSFLDIVAKYIFAFLLLNYLTS. Lys-256 bears the N6-(retinylidene)lysine mark. Residues 270–291 are Cytoplasmic-facing; that stretch reads NESVVSGSILDVPSASGTPADD.

The protein belongs to the archaeal/bacterial/fungal opsin family.

It localises to the cell membrane. Light-driven anion pump. Binding affinity for the anions is in the order, bromide &gt; chloride &gt; nitrate &gt; azide &gt; bromate and binding is pH dependent. The protein is Halorhodopsin (hop) of Natronomonas pharaonis (Natronobacterium pharaonis).